The primary structure comprises 341 residues: MQVALVGVTGYSGMVLYRLLKQHPEIDRIQLYGHVGATTVALKTVAAMYQKETAVIRPFDATAIMRDNAIVFFATSAGITRQLALPFIAAHFPVIDLSGDFRLHDPEQYQRWYQRDPASATALAQASYGLADMPAPLSTYIANPGCYATATLLGLAPLAQQQLVEPTSIVVDAKSGLSGAGKRATAASHYVAVNDNLSLYKLNQHQHIPEMMQQLQQWWSAISAIEFTTTLIPVTRGIMTTIYAKAKSALTTTQVRAAFTATYHEQPFVQVLPTGMPTLKDVVGSNNCALGVDYNPVTNTIVVVSVIDNLMKGAAGQAVQNFNRYFDFAVTAGLPTLPVFP.

Cysteine 146 is a catalytic residue.

This sequence belongs to the NAGSA dehydrogenase family. Type 1 subfamily.

It is found in the cytoplasm. It carries out the reaction N-acetyl-L-glutamate 5-semialdehyde + phosphate + NADP(+) = N-acetyl-L-glutamyl 5-phosphate + NADPH + H(+). It functions in the pathway amino-acid biosynthesis; L-arginine biosynthesis; N(2)-acetyl-L-ornithine from L-glutamate: step 3/4. Functionally, catalyzes the NADPH-dependent reduction of N-acetyl-5-glutamyl phosphate to yield N-acetyl-L-glutamate 5-semialdehyde. This Lactiplantibacillus plantarum (strain ATCC BAA-793 / NCIMB 8826 / WCFS1) (Lactobacillus plantarum) protein is N-acetyl-gamma-glutamyl-phosphate reductase 2.